A 341-amino-acid polypeptide reads, in one-letter code: Arfaptin-2 (341 aa).

Residues 46–85 form a disordered region; the sequence is NETSIVSGGYGGSGDGLIPTGSGRHPSHSTTPSGPGDEVA. S72 carries the phosphoserine modification. T76 is subject to Phosphothreonine. Positions 121-321 constitute an AH domain; it reads TVDLELELQI…NQKQLEQTLQ (201 aa).

Forms homodimers or heterodimers with ARFIP1. Interacts with RAC1. Specifically binds to GTP-bound ARF1 and ARF6, but binds to RAC1.GTP and RAC1.GDP with similar affinities. Interacts with ARL1. Interacts (via N-terminus) with IKBKB and IKBKG; these interactions inhibit activation of NF-kappa-B.

It localises to the golgi apparatus. The protein resides in the trans-Golgi network membrane. In terms of biological role, plays a role in constitutive metalloproteinase (MMP) secretion from the trans Golgi network. May have important functions during vesicle biogenesis at certain cargo subdomains, which could be predominantly utilized by secreted MMPs, such as MMP7 and MMP2. Also involved in autophagy by regulating the starvation-dependent trafficking of ATG9A vesicles which deliver the phosphatidylinositol 4-kinase beta (PI4KB) to the autophagosome initiation site. Involved in phagophore growth during mitophagy by regulating ATG9A trafficking to mitochondria. In addition, plays a role in NF-kappa-B inhibition by interacting with IKBKB and IKBKG. The chain is Arfaptin-2 from Homo sapiens (Human).